We begin with the raw amino-acid sequence, 81 residues long: NADH-ubiquinone oxidoreductase chain 6 (81 aa).

Helical transmembrane passes span 1 to 21, 27 to 47, and 48 to 68; these read MTYF…GVAS, YGVV…LSLG, and VSFV…VVFV.

Belongs to the complex I subunit 6 family.

It is found in the mitochondrion membrane. It carries out the reaction a ubiquinone + NADH + 5 H(+)(in) = a ubiquinol + NAD(+) + 4 H(+)(out). Core subunit of the mitochondrial membrane respiratory chain NADH dehydrogenase (Complex I) that is believed to belong to the minimal assembly required for catalysis. Complex I functions in the transfer of electrons from NADH to the respiratory chain. The immediate electron acceptor for the enzyme is believed to be ubiquinone. The polypeptide is NADH-ubiquinone oxidoreductase chain 6 (MT-ND6) (Anas platyrhynchos (Mallard)).